Reading from the N-terminus, the 166-residue chain is MSEAIIAKKAELVDVVAEKMKAAASIVVVDARGLTVEQDTVLRRELRGSEVEYKVIKNSILRRAAEKAGLEDLASVFVGPSAVAFSNEDVIAPAKILNNFSKNAEALEIKGGAIEGAVASKEEILALATLPNREGLLXMLLSVLQAPVRNVALAVKAVAESKEDAA.

The protein belongs to the universal ribosomal protein uL10 family. Part of the ribosomal stalk of the 50S ribosomal subunit. The N-terminus interacts with L11 and the large rRNA to form the base of the stalk. The C-terminus forms an elongated spine to which L12 dimers bind in a sequential fashion forming a multimeric L10(L12)X complex.

In terms of biological role, forms part of the ribosomal stalk, playing a central role in the interaction of the ribosome with GTP-bound translation factors. The polypeptide is Large ribosomal subunit protein uL10 (Streptococcus pneumoniae serotype 19F (strain G54)).